The following is a 428-amino-acid chain: MLDPKFLRSELEMTAERLATRGFILDVERLSKLEETRKSLQVATEELQASRNAISKSIGQAKAKGEDVAPIMAQVGSLGEELDAKKTELAALLEELNAIAMSVPNLPDESVPTGADESENVEVRRWGTPKEFDFAVKDHVELGENIGGLDFKNAVKITGSRFIVMKGQIARMHRALAQFMLDLHTTEHGYTEAYVPLLVNEDSLLGTGQLPKFGEDLFHTKPATEEGQGLSLIPTAEVPLTNLVRDTIVEEDNLPIKLTAHTPCFRSEAGSYGRDTRGLIRQHQFDKVEMVQLVKPEDSMQALEDLTGHAEVVLQKLGLPYRTMVLCTGDMGFGSAKTYDIEVWLPAQDTYREISSCSNMQDFQARRMQARYKGKTDKKPSLLHTLNGSGLAVGRTLVAVLENYQNADGSITVPEALRGYMGGLKKIG.

T235–E237 is an L-serine binding site. R266–E268 is a binding site for ATP. E289 contacts L-serine. E353–S356 is an ATP binding site. S389 contributes to the L-serine binding site.

Belongs to the class-II aminoacyl-tRNA synthetase family. Type-1 seryl-tRNA synthetase subfamily. In terms of assembly, homodimer. The tRNA molecule binds across the dimer.

Its subcellular location is the cytoplasm. It catalyses the reaction tRNA(Ser) + L-serine + ATP = L-seryl-tRNA(Ser) + AMP + diphosphate + H(+). It carries out the reaction tRNA(Sec) + L-serine + ATP = L-seryl-tRNA(Sec) + AMP + diphosphate + H(+). It functions in the pathway aminoacyl-tRNA biosynthesis; selenocysteinyl-tRNA(Sec) biosynthesis; L-seryl-tRNA(Sec) from L-serine and tRNA(Sec): step 1/1. In terms of biological role, catalyzes the attachment of serine to tRNA(Ser). Is also able to aminoacylate tRNA(Sec) with serine, to form the misacylated tRNA L-seryl-tRNA(Sec), which will be further converted into selenocysteinyl-tRNA(Sec). The sequence is that of Serine--tRNA ligase from Shewanella pealeana (strain ATCC 700345 / ANG-SQ1).